The following is a 153-amino-acid chain: Heavy metal-associated isoprenylated plant protein 26 (153 aa).

In terms of domain architecture, HMA spans 25-89 (LQTVEIKVKM…MSHRTGKKVE (65 aa)). Residues C36 and C39 each contribute to the a metal cation site. C150 carries the cysteine methyl ester modification. C150 is lipidated: S-farnesyl cysteine. Residues 151 to 153 (VVM) constitute a propeptide, removed in mature form.

This sequence belongs to the HIPP family. Interacts with ZHD11/HB29 and ACBP2 (via ankyrin repeats). May also interact with HB21. Expressed in roots, stems and flowers. Lower expression in siliques and leaves. Expressed in the vascular tissues. Detected in lateral roots, shoot apical meristem, petals of unopened flowers and weak expression in leaf vasculature.

The protein localises to the nucleus membrane. Its subcellular location is the cell membrane. Heavy-metal-binding protein. Binds lead, cadmium and copper. May be involved in heavy-metal transport. May be involved in cadmium transport and play a role in cadmium detoxification. The chain is Heavy metal-associated isoprenylated plant protein 26 from Arabidopsis thaliana (Mouse-ear cress).